We begin with the raw amino-acid sequence, 459 residues long: Serine permease SerP1 (459 aa).

The next 12 membrane-spanning stretches (helical) occupy residues 19-39 (IQLI…AGKT), 42-62 (MTGP…FFFL), 97-117 (SYWL…GTYI), 119-139 (FWLP…LLFG), 153-173 (FWFA…AIIL), 212-232 (FVGA…IGMT), 254-274 (ILLF…WHYI), 281-301 (FVIV…NFVV), 341-361 (AGIP…APVL), 370-390 (AFNF…FITL), 412-432 (PTIA…SLFF), and 436-456 (TFYP…YSHF).

Belongs to the amino acid-polyamine-organocation (APC) superfamily. Amino acid transporter (AAT) (TC 2.A.3.1) family.

Its subcellular location is the cell membrane. Its function is as follows. Transports L-serine, L-threonine and L-cysteine with high affinity. Stereoselective, with a strong preference for L-serine. Is the main L-serine transporter and is responsible for optimal growth in media containing free amino acids as the sole source of amino acids. Is also the main transporter for L-threonine. This Lactococcus lactis subsp. cremoris (strain MG1363) protein is Serine permease SerP1.